The sequence spans 382 residues: Acetylserotonin O-methyltransferase (382 aa).

5 residues coordinate S-adenosyl-L-homocysteine: Gly-218, Asp-241, Asp-261, Met-262, and Lys-275. The active-site Proton acceptor is His-279. Catalysis depends on residues Glu-308 and Glu-347.

Belongs to the class I-like SAM-binding methyltransferase superfamily. Cation-independent O-methyltransferase family.

It localises to the cytoplasm. It catalyses the reaction N-acetylserotonin + S-adenosyl-L-methionine = melatonin + S-adenosyl-L-homocysteine + H(+). It participates in aromatic compound metabolism; melatonin biosynthesis; melatonin from serotonin: step 1/2. In terms of biological role, methyltransferase which catalyzes the transfer of a methyl group onto N-acetylserotonin, producing melatonin (N-acetyl-5-methoxytryptamine). Does not seem to possess caffeate O-methyltransferase activity. Implicated in melatonin-dependent circadian dynamics of stomatal aperture to minimize night water loss and promote drought tolerance. Prevents seed germination by promoting melatonin biosynthesis. Promotes melatonin-triggered defense responses to the necrotrophic fungus Botrytis cinerea. Its function is as follows. (Microbial infection) Promotes melatonin-triggered defense responses to the necrotrophic fungus Botrytis cinerea. The protein is Acetylserotonin O-methyltransferase of Arabidopsis thaliana (Mouse-ear cress).